We begin with the raw amino-acid sequence, 321 residues long: Transaldolase (321 aa).

Lys132 functions as the Schiff-base intermediate with substrate in the catalytic mechanism.

The protein belongs to the transaldolase family. Type 1 subfamily. Homodimer.

The protein resides in the cytoplasm. It carries out the reaction D-sedoheptulose 7-phosphate + D-glyceraldehyde 3-phosphate = D-erythrose 4-phosphate + beta-D-fructose 6-phosphate. It participates in carbohydrate degradation; pentose phosphate pathway; D-glyceraldehyde 3-phosphate and beta-D-fructose 6-phosphate from D-ribose 5-phosphate and D-xylulose 5-phosphate (non-oxidative stage): step 2/3. Transaldolase is important for the balance of metabolites in the pentose-phosphate pathway. This chain is Transaldolase, found in Rhizobium etli (strain ATCC 51251 / DSM 11541 / JCM 21823 / NBRC 15573 / CFN 42).